The chain runs to 477 residues: RTX-I toxin determinant D (477 aa).

Residues 1 to 59 lie on the Cytoplasmic side of the membrane; sequence MKTWLMGLYEFFQAYKTVWTEIWKIRHQLDTPDREKDENEFLPAHLELIETPVSKKPRL. The chain crosses the membrane as a helical span at residues 60-80; it reads IAYLIMLFLFLALVISIVSHV. The Periplasmic segment spans residues 81–477; the sequence is EIVATATGKL…ESVSESLRER (397 aa).

Belongs to the membrane fusion protein (MFP) (TC 8.A.1) family.

Its subcellular location is the cell inner membrane. Functionally, involved in the transport of the toxin RTX-I as well as that of RTX-II. In Actinobacillus pleuropneumoniae (Haemophilus pleuropneumoniae), this protein is RTX-I toxin determinant D (apxID).